Here is a 372-residue protein sequence, read N- to C-terminus: NAD(P)H-quinone oxidoreductase subunit 1 (372 aa).

8 helical membrane passes run 27-47 (IIWL…GVLV), 97-117 (ILFT…WLIV), 128-148 (VGIG…GLLM), 176-196 (LALS…IDIV), 204-224 (ILSW…ICAL), 266-286 (ILSA…PVPV), 308-328 (SIGI…AILL), and 347-367 (FLLP…LAFP).

It belongs to the complex I subunit 1 family. In terms of assembly, NDH-1 is composed of at least 11 different subunits.

It localises to the cellular thylakoid membrane. The catalysed reaction is a plastoquinone + NADH + (n+1) H(+)(in) = a plastoquinol + NAD(+) + n H(+)(out). It catalyses the reaction a plastoquinone + NADPH + (n+1) H(+)(in) = a plastoquinol + NADP(+) + n H(+)(out). Its function is as follows. NDH-1 shuttles electrons from an unknown electron donor, via FMN and iron-sulfur (Fe-S) centers, to quinones in the respiratory and/or the photosynthetic chain. The immediate electron acceptor for the enzyme in this species is believed to be plastoquinone. Couples the redox reaction to proton translocation, and thus conserves the redox energy in a proton gradient. The chain is NAD(P)H-quinone oxidoreductase subunit 1 from Prochlorococcus marinus (strain AS9601).